A 297-amino-acid polypeptide reads, in one-letter code: Transcription factor MYB1R1 (297 aa).

The tract at residues 44-96 (DLSQYEHPNANNNNNGGDNNESSKVAQDEGYASADDAVQHQSNSGRERKRGVP) is disordered. Residues 52–63 (NANNNNNGGDNN) show a composition bias toward low complexity. An HTH myb-type domain is found at 89 to 145 (RERKRGVPWTEEEHKLFLLGLQKVGKGDWRGISRNFVKTRTPTQVASHAQKYFLRRS). The segment at residues 117-141 (WRGISRNFVKTRTPTQVASHAQKYF) is a DNA-binding region (H-T-H motif).

Its subcellular location is the nucleus. It is found in the cytoplasm. The protein localises to the cytosol. Its function is as follows. Binds selectively to the DNA sequence 5'-[GA]GATAA-3' and may act as a transcription factor involved in the regulation of drought-responsive genes. Enhances stomatal closure in response to abscisic acid (ABA). Confers drought and salt tolerance. The chain is Transcription factor MYB1R1 from Solanum tuberosum (Potato).